The sequence spans 312 residues: tRNA dimethylallyltransferase (312 aa).

11–18 lines the ATP pocket; sequence GPTAVGKT. 13–18 is a binding site for substrate; sequence TAVGKT. An interaction with substrate tRNA region spans residues 159–163; that stretch reads QRVLR.

It belongs to the IPP transferase family. Monomer. It depends on Mg(2+) as a cofactor.

The enzyme catalyses adenosine(37) in tRNA + dimethylallyl diphosphate = N(6)-dimethylallyladenosine(37) in tRNA + diphosphate. Its function is as follows. Catalyzes the transfer of a dimethylallyl group onto the adenine at position 37 in tRNAs that read codons beginning with uridine, leading to the formation of N6-(dimethylallyl)adenosine (i(6)A). This Macrococcus caseolyticus (strain JCSC5402) (Macrococcoides caseolyticum) protein is tRNA dimethylallyltransferase.